The chain runs to 150 residues: D-aminoacyl-tRNA deacylase (150 aa).

Residues 140–141 (GP) carry the Gly-cisPro motif, important for rejection of L-amino acids motif.

It belongs to the DTD family. In terms of assembly, homodimer.

Its subcellular location is the cytoplasm. The enzyme catalyses glycyl-tRNA(Ala) + H2O = tRNA(Ala) + glycine + H(+). The catalysed reaction is a D-aminoacyl-tRNA + H2O = a tRNA + a D-alpha-amino acid + H(+). In terms of biological role, an aminoacyl-tRNA editing enzyme that deacylates mischarged D-aminoacyl-tRNAs. Also deacylates mischarged glycyl-tRNA(Ala), protecting cells against glycine mischarging by AlaRS. Acts via tRNA-based rather than protein-based catalysis; rejects L-amino acids rather than detecting D-amino acids in the active site. By recycling D-aminoacyl-tRNA to D-amino acids and free tRNA molecules, this enzyme counteracts the toxicity associated with the formation of D-aminoacyl-tRNA entities in vivo and helps enforce protein L-homochirality. This chain is D-aminoacyl-tRNA deacylase (DTD1), found in Eremothecium gossypii (strain ATCC 10895 / CBS 109.51 / FGSC 9923 / NRRL Y-1056) (Yeast).